The chain runs to 88 residues: DNA-directed RNA polymerase subunit omega (88 aa).

Belongs to the RNA polymerase subunit omega family. In terms of assembly, the RNAP catalytic core consists of 2 alpha, 1 beta, 1 beta' and 1 omega subunit. When a sigma factor is associated with the core the holoenzyme is formed, which can initiate transcription.

The catalysed reaction is RNA(n) + a ribonucleoside 5'-triphosphate = RNA(n+1) + diphosphate. Its function is as follows. Promotes RNA polymerase assembly. Latches the N- and C-terminal regions of the beta' subunit thereby facilitating its interaction with the beta and alpha subunits. In Clostridioides difficile (strain 630) (Peptoclostridium difficile), this protein is DNA-directed RNA polymerase subunit omega.